A 107-amino-acid polypeptide reads, in one-letter code: Phosphoribosyl-ATP pyrophosphatase (107 aa).

Belongs to the PRA-PH family.

It is found in the cytoplasm. The catalysed reaction is 1-(5-phospho-beta-D-ribosyl)-ATP + H2O = 1-(5-phospho-beta-D-ribosyl)-5'-AMP + diphosphate + H(+). The protein operates within amino-acid biosynthesis; L-histidine biosynthesis; L-histidine from 5-phospho-alpha-D-ribose 1-diphosphate: step 2/9. The chain is Phosphoribosyl-ATP pyrophosphatase (hisE) from Clostridium tetani (strain Massachusetts / E88).